The sequence spans 141 residues: Putative ankyrin repeat protein FPV223 (141 aa).

ANK repeat units follow at residues 21–50 (SGRT…DVFK), 54–83 (CMCT…YIVK), 85–114 (RNKL…NENS), and 118–140 (DGLT…MFVI).

This is Putative ankyrin repeat protein FPV223 from Vertebrata (FPV).